A 287-amino-acid chain; its full sequence is Oxaloacetate decarboxylase (287 aa).

S50 contributes to the substrate binding site. D88 is a Mg(2+) binding site. The substrate site is built by R159 and H235.

Belongs to the isocitrate lyase/PEP mutase superfamily. Oxaloacetate decarboxylase family. As to quaternary structure, homotetramer; dimer of dimers. Requires Mg(2+) as cofactor.

It catalyses the reaction oxaloacetate + H(+) = pyruvate + CO2. Its function is as follows. Catalyzes the decarboxylation of oxaloacetate into pyruvate. Seems to play a role in maintaining cellular concentrations of bicarbonate and pyruvate. This Marinomonas sp. (strain MWYL1) protein is Oxaloacetate decarboxylase.